The following is a 663-amino-acid chain: MKDLFKIYSNYQPAGDQPTAIASLIDGLESGLAKQTLLGVTGSGKTFTIAHVIQAMKRPTLIMAPNKTLAAQLYGEFKAFFPDNAVEYFVSYYDYYQPEAYVPASDTFIEKDASINEHIEQMRLSATKALIERKDAIIVATVSAIYGLGDPDSYLRMLLHLSRGEQSDQRKILKRLAEMQYTRTNLSLERGQFRVNGDVIDIFPADSEKEAIRIELFDDEVDNIARFDPLTGEILQRLPRVTIFPKTHYVTPRERILETVEKVKVELQERLAELNAQNKLVEAQRLEQRTCFDIEMMLELGYCSGIENYSRYLSNREAGEAPPTLFDYLPPEALLIIDESHVTVPQIGGMYRGDRARKETLVNYGFRLPSALDNRPLRFEEFEERSPQTIYISATPGPYEQEHSDNVAEQVVRPTGLIDPEVEIRPVKTQVDDLMSEIRQVIAQGSRILVTTLTKRMAEDLTEYLSEHGIKVRYLHSDVDTVERMEIIRDLRLGEFDVLVGINLLREGLDMPEVALVAILDADKEGFLRSERSLIQTIGRAARNVKGRAILYADNITGSMQRALTETERRREKQKAFNLKHGITPKGINKSVEDILEGAYIGKRKTMVAEQAPRYTHWSPQELAKQINALEKQMYAHAQNMEFELAAKIRDEYLLLKEQLMKI.

A Helicase ATP-binding domain is found at 26–414; the sequence is DGLESGLAKQ…DNVAEQVVRP (389 aa). 39-46 provides a ligand contact to ATP; it reads GVTGSGKT. Positions 92–115 match the Beta-hairpin motif; it reads YYDYYQPEAYVPASDTFIEKDASI. The 167-residue stretch at 430–596 folds into the Helicase C-terminal domain; sequence QVDDLMSEIR…GINKSVEDIL (167 aa). A UVR domain is found at 624-659; sequence AKQINALEKQMYAHAQNMEFELAAKIRDEYLLLKEQ.

The protein belongs to the UvrB family. As to quaternary structure, forms a heterotetramer with UvrA during the search for lesions. Interacts with UvrC in an incision complex.

The protein resides in the cytoplasm. Its function is as follows. The UvrABC repair system catalyzes the recognition and processing of DNA lesions. A damage recognition complex composed of 2 UvrA and 2 UvrB subunits scans DNA for abnormalities. Upon binding of the UvrA(2)B(2) complex to a putative damaged site, the DNA wraps around one UvrB monomer. DNA wrap is dependent on ATP binding by UvrB and probably causes local melting of the DNA helix, facilitating insertion of UvrB beta-hairpin between the DNA strands. Then UvrB probes one DNA strand for the presence of a lesion. If a lesion is found the UvrA subunits dissociate and the UvrB-DNA preincision complex is formed. This complex is subsequently bound by UvrC and the second UvrB is released. If no lesion is found, the DNA wraps around the other UvrB subunit that will check the other stand for damage. This Legionella pneumophila (strain Lens) protein is UvrABC system protein B.